The sequence spans 95 residues: Protein GOLVEN 9 (95 aa).

Residues 1 to 24 form the signal peptide; that stretch reads MKKTSLKLMTLVLGFCFVIYLLQG. Positions 25-73 are excised as a propeptide; sequence PRGGSRNGDLLIARKLISLEPIETKNAARSLKDSISTDLEEEVDRLMEH. Residues 72 to 95 are disordered; sequence EHEYPSPVKPRKRTPVHNGVRNRH. Tyr-75 carries the post-translational modification Sulfotyrosine. The span at 80–95 shows a compositional bias: basic residues; the sequence is KPRKRTPVHNGVRNRH. Pro-86 bears the Hydroxyproline mark. Positions 90–95 are excised as a propeptide; the sequence is GVRNRH.

This sequence belongs to the RGF family. As to quaternary structure, binds to LRR receptor-like serine/threonine-protein kinases to trigger their dimerization with SERK proteins and subsequent signaling. In terms of tissue distribution, expressed in roots.

Its subcellular location is the secreted. Functionally, signaling peptide (root growth factor) required during root gravitropism in a PIN2-traffic dependent manner. Regulates the pattern of root growth and lateral root development by modulating the length and the number of cortical cells in the root apical meristem (RAM), and the anticlinal asymmetric cell divisions in lateral root initiation cells. In Arabidopsis thaliana (Mouse-ear cress), this protein is Protein GOLVEN 9.